The following is a 538-amino-acid chain: Thermosome subunit beta (538 aa).

Residues 518–538 are disordered; the sequence is SSGSSEEGMEEMGGMGGMPPM. Residues 528 to 538 are compositionally biased toward gly residues; the sequence is EMGGMGGMPPM.

The protein belongs to the TCP-1 chaperonin family. In terms of assembly, forms a Heterooligomeric complex of two stacked eight-membered rings.

Functionally, molecular chaperone; binds unfolded polypeptides in vitro, and has a weak ATPase activity. The protein is Thermosome subunit beta (thsB) of Methanothermobacter thermautotrophicus (strain ATCC 29096 / DSM 1053 / JCM 10044 / NBRC 100330 / Delta H) (Methanobacterium thermoautotrophicum).